Here is a 431-residue protein sequence, read N- to C-terminus: Serine hydroxymethyltransferase (431 aa).

Residues leucine 126 and 130–132 (GHL) each bind (6S)-5,6,7,8-tetrahydrofolate. Lysine 235 is subject to N6-(pyridoxal phosphate)lysine.

Belongs to the SHMT family. In terms of assembly, homodimer. The cofactor is pyridoxal 5'-phosphate.

The protein localises to the cytoplasm. It carries out the reaction (6R)-5,10-methylene-5,6,7,8-tetrahydrofolate + glycine + H2O = (6S)-5,6,7,8-tetrahydrofolate + L-serine. Its pathway is one-carbon metabolism; tetrahydrofolate interconversion. The protein operates within amino-acid biosynthesis; glycine biosynthesis; glycine from L-serine: step 1/1. In terms of biological role, catalyzes the reversible interconversion of serine and glycine with tetrahydrofolate (THF) serving as the one-carbon carrier. This reaction serves as the major source of one-carbon groups required for the biosynthesis of purines, thymidylate, methionine, and other important biomolecules. Also exhibits THF-independent aldolase activity toward beta-hydroxyamino acids, producing glycine and aldehydes, via a retro-aldol mechanism. This is Serine hydroxymethyltransferase from Nocardia farcinica (strain IFM 10152).